We begin with the raw amino-acid sequence, 1381 residues long: Protein HEG homolog 1 (1381 aa).

A signal peptide spans 1–29 (MASPRASRWPPPLLLLLLPLLLLPPAAPG). The tract at residues 24-108 (PPAAPGTRDP…APRGGSADAA (85 aa)) is disordered. Residues 25-37 (PAAPGTRDPPPSP) are compositionally biased toward pro residues. The Extracellular segment spans residues 30 to 1248 (TRDPPPSPAR…GLNCGNPYQL (1219 aa)). Residues 38–52 (ARRALSLAPLAGAGL) show a composition bias toward low complexity. Over residues 55-74 (QLERRPEREPPPTPPRERRG) the composition is skewed to basic and acidic residues. The O-linked (GalNAc...) threonine glycan is linked to Thr-67. The segment covering 93–105 (RGPSGRAPRGGSA) has biased composition (low complexity). 4 N-linked (GlcNAc...) asparagine glycosylation sites follow: Asn-123, Asn-159, Asn-180, and Asn-314. Positions 301 to 316 (DLSSSSESTEKLNNST) are enriched in low complexity. 2 disordered regions span residues 301–325 (DLSSSSESTEKLNNSTGLQSSSVSQ) and 376–447 (PSAV…RSVA). A compositionally biased stretch (polar residues) spans 424 to 444 (LASSSEVQNGSPMSQTETVSR). 3 N-linked (GlcNAc...) asparagine glycosylation sites follow: Asn-462, Asn-520, and Asn-610. Residues 491-529 (STVQSGGSHTALGDRSYSESSSTSSSESLNSSAPRGERS) are disordered. Residues 508-522 (SESSSTSSSESLNSS) show a composition bias toward low complexity. Disordered stretches follow at residues 612–680 (SSYD…PLPS), 706–757 (SDAS…PVTS), and 774–830 (QTAD…TLPA). Over residues 620–648 (QPSTESPVLHTSNLPSYTPTINMPNTSVV) the composition is skewed to polar residues. 2 stretches are compositionally biased toward low complexity: residues 657 to 680 (SDSSSSSSSSSSSSSSGPPLPLPS) and 706 to 748 (SDAS…PVLP). Composition is skewed to polar residues over residues 774 to 784 (QTADLKSQSTP) and 792 to 809 (ESKSPSLVSLPTESTKAV). Residues 810-825 (TTNSPLPPSLTESSTE) show a composition bias toward low complexity. Residues 985 to 1023 (SVNSCAVNPCLHNGECVADNTSRGYHCRCPPSWQGDDCS) enclose the EGF-like 1 domain. 6 disulfides stabilise this stretch: Cys-989–Cys-1000, Cys-994–Cys-1011, Cys-1013–Cys-1022, Cys-1029–Cys-1040, Cys-1034–Cys-1049, and Cys-1051–Cys-1062. Positions 1025 to 1063 (DVNECLSNPCPSTAMCNNTQGSFICKCPVGYQLEKGICN) constitute an EGF-like 2; calcium-binding domain. N-linked (GlcNAc...) asparagine glycosylation occurs at Asn-1137. A helical transmembrane segment spans residues 1249-1269 (ITVVIAAAGGGLLLILGIALI). The Cytoplasmic segment spans residues 1270-1381 (VTCCRKNKND…SDESRRRDYF (112 aa)). Residue Ser-1359 is modified to Phosphoserine.

As to quaternary structure, interacts with CCM2 and KRIT1; KRIT1 markedly facilitates interaction with CCM2.

Its subcellular location is the cell membrane. The protein resides in the cell junction. It localises to the secreted. In terms of biological role, receptor component of the CCM signaling pathway which is a crucial regulator of heart and vessel formation and integrity. May act through the stabilization of endothelial cell junctions. This is Protein HEG homolog 1 (HEG1) from Homo sapiens (Human).